Consider the following 943-residue polypeptide: Isoleucine--tRNA ligase (943 aa).

The short motif at 58–68 (PYANGSIHIGH) is the 'HIGH' region element. Position 567 (Glu-567) interacts with L-isoleucyl-5'-AMP. A 'KMSKS' region motif is present at residues 608 to 612 (KMSKS). Lys-611 contributes to the ATP binding site. Positions 906, 909, 926, and 929 each coordinate Zn(2+).

Belongs to the class-I aminoacyl-tRNA synthetase family. IleS type 1 subfamily. Monomer. It depends on Zn(2+) as a cofactor.

It localises to the cytoplasm. It catalyses the reaction tRNA(Ile) + L-isoleucine + ATP = L-isoleucyl-tRNA(Ile) + AMP + diphosphate. In terms of biological role, catalyzes the attachment of isoleucine to tRNA(Ile). As IleRS can inadvertently accommodate and process structurally similar amino acids such as valine, to avoid such errors it has two additional distinct tRNA(Ile)-dependent editing activities. One activity is designated as 'pretransfer' editing and involves the hydrolysis of activated Val-AMP. The other activity is designated 'posttransfer' editing and involves deacylation of mischarged Val-tRNA(Ile). This is Isoleucine--tRNA ligase from Pseudomonas aeruginosa (strain LESB58).